The following is a 119-amino-acid chain: Putative nitrilase-like protein YIL165C (119 aa).

The region spanning 1-82 (MKNIAYEGRL…EGLLTAEINT (82 aa)) is the CN hydrolase domain. Asp-21 functions as the Proton acceptor in the catalytic mechanism.

It belongs to the carbon-nitrogen hydrolase superfamily. Nitrilase family.

The polypeptide is Putative nitrilase-like protein YIL165C (Saccharomyces cerevisiae (strain ATCC 204508 / S288c) (Baker's yeast)).